Reading from the N-terminus, the 214-residue chain is uncharacterized protein (214 aa).

A run of 4 helical transmembrane segments spans residues 43 to 63, 84 to 104, 116 to 136, and 150 to 170; these read IQKP…AAHI, IEWA…IPVI, ALVI…EYFI, and PVTR…FGIF.

The protein localises to the host membrane. This is an uncharacterized protein from Citrus leprosis virus C (isolate Citrus sinesis/Brazil/Cordeiropolis/2003) (CiLV-C).